The following is a 94-amino-acid chain: Pyrimidine/purine nucleoside phosphorylase (94 aa).

It belongs to the nucleoside phosphorylase PpnP family.

The catalysed reaction is a purine D-ribonucleoside + phosphate = a purine nucleobase + alpha-D-ribose 1-phosphate. It carries out the reaction adenosine + phosphate = alpha-D-ribose 1-phosphate + adenine. The enzyme catalyses cytidine + phosphate = cytosine + alpha-D-ribose 1-phosphate. It catalyses the reaction guanosine + phosphate = alpha-D-ribose 1-phosphate + guanine. The catalysed reaction is inosine + phosphate = alpha-D-ribose 1-phosphate + hypoxanthine. It carries out the reaction thymidine + phosphate = 2-deoxy-alpha-D-ribose 1-phosphate + thymine. The enzyme catalyses uridine + phosphate = alpha-D-ribose 1-phosphate + uracil. It catalyses the reaction xanthosine + phosphate = alpha-D-ribose 1-phosphate + xanthine. Its function is as follows. Catalyzes the phosphorolysis of diverse nucleosides, yielding D-ribose 1-phosphate and the respective free bases. Can use uridine, adenosine, guanosine, cytidine, thymidine, inosine and xanthosine as substrates. Also catalyzes the reverse reactions. This is Pyrimidine/purine nucleoside phosphorylase from Saccharophagus degradans (strain 2-40 / ATCC 43961 / DSM 17024).